The primary structure comprises 122 residues: Small ribosomal subunit protein uS13 (122 aa).

The interval 97 to 122 (PVRGQRTRTNARTRKGPRKTVAKKKK) is disordered. The segment covering 101–122 (QRTRTNARTRKGPRKTVAKKKK) has biased composition (basic residues).

Belongs to the universal ribosomal protein uS13 family. Part of the 30S ribosomal subunit. Forms a loose heterodimer with protein S19. Forms two bridges to the 50S subunit in the 70S ribosome.

Functionally, located at the top of the head of the 30S subunit, it contacts several helices of the 16S rRNA. In the 70S ribosome it contacts the 23S rRNA (bridge B1a) and protein L5 of the 50S subunit (bridge B1b), connecting the 2 subunits; these bridges are implicated in subunit movement. Contacts the tRNAs in the A and P-sites. In Caldanaerobacter subterraneus subsp. tengcongensis (strain DSM 15242 / JCM 11007 / NBRC 100824 / MB4) (Thermoanaerobacter tengcongensis), this protein is Small ribosomal subunit protein uS13.